Consider the following 292-residue polypeptide: ATP phosphoribosyltransferase (292 aa).

The protein belongs to the ATP phosphoribosyltransferase family. Long subfamily. Mg(2+) serves as cofactor.

The protein resides in the cytoplasm. It catalyses the reaction 1-(5-phospho-beta-D-ribosyl)-ATP + diphosphate = 5-phospho-alpha-D-ribose 1-diphosphate + ATP. It functions in the pathway amino-acid biosynthesis; L-histidine biosynthesis; L-histidine from 5-phospho-alpha-D-ribose 1-diphosphate: step 1/9. Feedback inhibited by histidine. Catalyzes the condensation of ATP and 5-phosphoribose 1-diphosphate to form N'-(5'-phosphoribosyl)-ATP (PR-ATP). Has a crucial role in the pathway because the rate of histidine biosynthesis seems to be controlled primarily by regulation of HisG enzymatic activity. The protein is ATP phosphoribosyltransferase of Thermodesulfovibrio yellowstonii (strain ATCC 51303 / DSM 11347 / YP87).